We begin with the raw amino-acid sequence, 360 residues long: Ferrochelatase (360 aa).

Fe cation-binding residues include H210 and E291.

It belongs to the ferrochelatase family.

It localises to the cytoplasm. The catalysed reaction is heme b + 2 H(+) = protoporphyrin IX + Fe(2+). It functions in the pathway porphyrin-containing compound metabolism; protoheme biosynthesis; protoheme from protoporphyrin-IX: step 1/1. In terms of biological role, catalyzes the ferrous insertion into protoporphyrin IX. This is Ferrochelatase from Pseudoalteromonas atlantica (strain T6c / ATCC BAA-1087).